Here is a 261-residue protein sequence, read N- to C-terminus: uncharacterized protein (261 aa).

Positions 16-147 form a coiled coil; it reads KQTSLVLQNL…QTNVNVLRSQ (132 aa).

The protein resides in the cytoplasm. This is an uncharacterized protein from Schizosaccharomyces pombe (strain 972 / ATCC 24843) (Fission yeast).